Reading from the N-terminus, the 163-residue chain is Nucleotide-binding protein NFA_51200 (163 aa).

It belongs to the YajQ family.

Its function is as follows. Nucleotide-binding protein. The sequence is that of Nucleotide-binding protein NFA_51200 from Nocardia farcinica (strain IFM 10152).